Here is a 223-residue protein sequence, read N- to C-terminus: Phosphoribosylformylglycinamidine synthase subunit PurQ (223 aa).

Residues serine 3–alanine 223 form the Glutamine amidotransferase type-1 domain. Catalysis depends on cysteine 86, which acts as the Nucleophile. Residues histidine 196 and glutamate 198 contribute to the active site.

Part of the FGAM synthase complex composed of 1 PurL, 1 PurQ and 2 PurS subunits.

The protein resides in the cytoplasm. The enzyme catalyses N(2)-formyl-N(1)-(5-phospho-beta-D-ribosyl)glycinamide + L-glutamine + ATP + H2O = 2-formamido-N(1)-(5-O-phospho-beta-D-ribosyl)acetamidine + L-glutamate + ADP + phosphate + H(+). The catalysed reaction is L-glutamine + H2O = L-glutamate + NH4(+). Its pathway is purine metabolism; IMP biosynthesis via de novo pathway; 5-amino-1-(5-phospho-D-ribosyl)imidazole from N(2)-formyl-N(1)-(5-phospho-D-ribosyl)glycinamide: step 1/2. Its function is as follows. Part of the phosphoribosylformylglycinamidine synthase complex involved in the purines biosynthetic pathway. Catalyzes the ATP-dependent conversion of formylglycinamide ribonucleotide (FGAR) and glutamine to yield formylglycinamidine ribonucleotide (FGAM) and glutamate. The FGAM synthase complex is composed of three subunits. PurQ produces an ammonia molecule by converting glutamine to glutamate. PurL transfers the ammonia molecule to FGAR to form FGAM in an ATP-dependent manner. PurS interacts with PurQ and PurL and is thought to assist in the transfer of the ammonia molecule from PurQ to PurL. This Rhizobium meliloti (strain 1021) (Ensifer meliloti) protein is Phosphoribosylformylglycinamidine synthase subunit PurQ.